Consider the following 135-residue polypeptide: Galectin-1 (135 aa).

Ala2 carries the N-acetylalanine modification. Positions 4–135 (GLVASNLNLK…DFKIKCVAFE (132 aa)) constitute a Galectin domain. N6-acetyllysine occurs at positions 13, 19, and 29. Ser30 carries the post-translational modification Phosphoserine. Residues 45 to 49 (HFNPR), His53, Asn62, and 69 to 72 (WGTE) contribute to the a beta-D-galactoside site. Lys108 is subject to N6-acetyllysine; alternate. At Lys108 the chain carries N6-succinyllysine; alternate. N6-acetyllysine is present on Lys128.

In terms of assembly, homodimer. Binds LGALS3BP. Interacts with CD2, CD3, CD4, CD6, CD7, CD43, ALCAM and CD45. Interacts with laminin (via poly-N-acetyllactosamine). Interacts with SUSD2. Interacts with cargo receptor TMED10; the interaction mediates the translocation from the cytoplasm into the ERGIC (endoplasmic reticulum-Golgi intermediate compartment) and thereby secretion. Interacts with CD69.

The protein resides in the secreted. It is found in the extracellular space. Its subcellular location is the extracellular matrix. It localises to the cytoplasm. Its function is as follows. Lectin that binds beta-galactoside and a wide array of complex carbohydrates. Plays a role in regulating apoptosis, cell proliferation and cell differentiation. Inhibits CD45 protein phosphatase activity and therefore the dephosphorylation of Lyn kinase. Strong inducer of T-cell apoptosis. Plays a negative role in Th17 cell differentiation via activation of the receptor CD69. In Mus musculus (Mouse), this protein is Galectin-1 (Lgals1).